Reading from the N-terminus, the 324-residue chain is Beta-ketoacyl-[acyl-carrier-protein] synthase III (324 aa).

Catalysis depends on residues Cys-112 and His-249. An ACP-binding region spans residues 250-254; sequence QANDR. Asn-279 is an active-site residue.

Belongs to the thiolase-like superfamily. FabH family. Homodimer.

The protein localises to the cytoplasm. It carries out the reaction malonyl-[ACP] + acetyl-CoA + H(+) = 3-oxobutanoyl-[ACP] + CO2 + CoA. The protein operates within lipid metabolism; fatty acid biosynthesis. Its function is as follows. Catalyzes the condensation reaction of fatty acid synthesis by the addition to an acyl acceptor of two carbons from malonyl-ACP. Catalyzes the first condensation reaction which initiates fatty acid synthesis and may therefore play a role in governing the total rate of fatty acid production. Possesses both acetoacetyl-ACP synthase and acetyl transacylase activities. Its substrate specificity determines the biosynthesis of branched-chain and/or straight-chain of fatty acids. The sequence is that of Beta-ketoacyl-[acyl-carrier-protein] synthase III from Streptococcus gordonii (strain Challis / ATCC 35105 / BCRC 15272 / CH1 / DL1 / V288).